The sequence spans 605 residues: Isocitrate dehydrogenase kinase/phosphatase (605 aa).

ATP is bound by residues 327–333 and K348; that span reads APGIKGL. The active site involves D383.

Belongs to the AceK family.

It is found in the cytoplasm. The enzyme catalyses L-seryl-[isocitrate dehydrogenase] + ATP = O-phospho-L-seryl-[isocitrate dehydrogenase] + ADP + H(+). In terms of biological role, bifunctional enzyme which can phosphorylate or dephosphorylate isocitrate dehydrogenase (IDH) on a specific serine residue. This is a regulatory mechanism which enables bacteria to bypass the Krebs cycle via the glyoxylate shunt in response to the source of carbon. When bacteria are grown on glucose, IDH is fully active and unphosphorylated, but when grown on acetate or ethanol, the activity of IDH declines drastically concomitant with its phosphorylation. The sequence is that of Isocitrate dehydrogenase kinase/phosphatase from Burkholderia lata (strain ATCC 17760 / DSM 23089 / LMG 22485 / NCIMB 9086 / R18194 / 383).